A 214-amino-acid polypeptide reads, in one-letter code: Probable GTP-binding protein EngB (214 aa).

Residues 22-194 (NLPEIAFAGR…WARIDALLSP (173 aa)) enclose the EngB-type G domain. Residues 30-37 (GRSNVGKS), 57-61 (GRTQL), 75-78 (DLPG), 142-145 (TKCD), and 173-175 (FSA) contribute to the GTP site. 2 residues coordinate Mg(2+): S37 and T59.

Belongs to the TRAFAC class TrmE-Era-EngA-EngB-Septin-like GTPase superfamily. EngB GTPase family. The cofactor is Mg(2+).

In terms of biological role, necessary for normal cell division and for the maintenance of normal septation. In Citrifermentans bemidjiense (strain ATCC BAA-1014 / DSM 16622 / JCM 12645 / Bem) (Geobacter bemidjiensis), this protein is Probable GTP-binding protein EngB.